Here is a 426-residue protein sequence, read N- to C-terminus: Glutamate-1-semialdehyde 2,1-aminomutase (426 aa).

N6-(pyridoxal phosphate)lysine is present on Lys-265.

It belongs to the class-III pyridoxal-phosphate-dependent aminotransferase family. HemL subfamily. Homodimer. Requires pyridoxal 5'-phosphate as cofactor.

It localises to the cytoplasm. It catalyses the reaction (S)-4-amino-5-oxopentanoate = 5-aminolevulinate. The protein operates within porphyrin-containing compound metabolism; protoporphyrin-IX biosynthesis; 5-aminolevulinate from L-glutamyl-tRNA(Glu): step 2/2. In Neisseria gonorrhoeae (strain ATCC 700825 / FA 1090), this protein is Glutamate-1-semialdehyde 2,1-aminomutase.